Reading from the N-terminus, the 304-residue chain is Protease HtpX homolog (304 aa).

2 consecutive transmembrane segments (helical) span residues 14–34 (VFIV…IGII) and 39–59 (YLNG…IMVM). His144 serves as a coordination point for Zn(2+). Glu145 is an active-site residue. Zn(2+) is bound at residue His148. 2 consecutive transmembrane segments (helical) span residues 161-181 (IALV…IFWG) and 202-222 (LIIY…ATAI). Residue Glu231 coordinates Zn(2+). The interval 276-295 (SPLKSKKDKPGIFDSHPPIS) is disordered.

This sequence belongs to the peptidase M48B family. It depends on Zn(2+) as a cofactor.

It localises to the cell membrane. The chain is Protease HtpX homolog from Listeria welshimeri serovar 6b (strain ATCC 35897 / DSM 20650 / CCUG 15529 / CIP 8149 / NCTC 11857 / SLCC 5334 / V8).